The chain runs to 130 residues: Gonadotropin subunit beta-1 (130 aa).

A signal peptide spans 1-18; that stretch reads MRMRFVVMVILLPALMMS. Cystine bridges form between Cys26/Cys74, Cys40/Cys89, Cys51/Cys105, Cys55/Cys107, and Cys110/Cys117. N-linked (GlcNAc...) asparagine glycosylation is present at Asn30.

It belongs to the glycoprotein hormones subunit beta family. In terms of assembly, heterodimer of an alpha and a beta chain.

Its subcellular location is the secreted. Its function is as follows. Involved in gametogenesis and steroidogenesis. The protein is Gonadotropin subunit beta-1 (cgba) of Carassius auratus (Goldfish).